The primary structure comprises 583 residues: Poly [ADP-ribose] polymerase 2 (583 aa).

The disordered stretch occupies residues 1-77; that stretch reads MAARRRRSTG…GMPGRSWASK (77 aa). Positions 1–103 are N-terminal region (NTR); it reads MAARRRRSTG…VDPECTAKVG (103 aa). 2 consecutive short sequence motifs (nuclear localization signal) follow at residues 21-22 and 35-40; these read KR and PAKKTR. Residues Lys37 and Lys38 each carry the N6-acetyllysine modification. The span at 57-67 shows a compositional bias: basic and acidic residues; sequence ANKDRTEDKQD. The WGR domain maps to 104–201; that stretch reads KAHVYCEGND…EKFEKVPGKY (98 aa). Phosphoserine is present on residues Ser226 and Ser232. Positions 231–348 constitute a PARP alpha-helical domain; it reads ESQLDLRVQE…DIEIAIKLVK (118 aa). The region spanning 356-583 is the PARP catalytic domain; sequence HPLDQHYRNL…KVQFNFLQLW (228 aa). NAD(+) is bound by residues 428 to 430, Gly437, Arg444, and Ser470; that span reads HGS. Glu558 serves as the catalytic For poly [ADP-ribose] polymerase activity.

It belongs to the ARTD/PARP family. Component of a base excision repair (BER) complex, containing at least XRCC1, PARP1, POLB and LRIG3. Homo- and heterodimer with PARP1. Interacts (via the PARP catalytic domain) with HPF1. Interacts with core nucleosomes. In terms of processing, auto poly-ADP-ribosylated on serine residues, leading to dissociation of the PARP2-HPF1 complex from chromatin. Poly-ADP-ribosylated by PARP1. Acetylation reduces DNA binding and enzymatic activity. Post-translationally, proteolytically cleaved by caspase-8 (CASP8) in response to apoptosis, leading to its inactivation. In terms of tissue distribution, widely expressed, mainly in actively dividing tissues. The highest levels are in the brain, heart, pancreas, skeletal muscle and testis; also detected in kidney, liver, lung, placenta, ovary and spleen; levels are low in leukocytes, colon, small intestine, prostate and thymus.

It localises to the nucleus. Its subcellular location is the chromosome. The enzyme catalyses NAD(+) + (ADP-D-ribosyl)n-acceptor = nicotinamide + (ADP-D-ribosyl)n+1-acceptor + H(+).. The catalysed reaction is L-seryl-[protein] + NAD(+) = O-(ADP-D-ribosyl)-L-seryl-[protein] + nicotinamide + H(+). It catalyses the reaction L-aspartyl-[protein] + NAD(+) = 4-O-(ADP-D-ribosyl)-L-aspartyl-[protein] + nicotinamide. It carries out the reaction L-glutamyl-[protein] + NAD(+) = 5-O-(ADP-D-ribosyl)-L-glutamyl-[protein] + nicotinamide. With respect to regulation, ADP-ribosyltransferase activity is regulated via an allosteric activation mechanism. In absence of activation signal, PARP2 is autoinhibited by the PARP alpha-helical domain (also named HD region), which prevents effective NAD(+)-binding. Activity is highly stimulated by signals, which unfold the PARP alpha-helical domain, relieving autoinhibition. Poly-ADP-ribosyltransferase activity is tightly regulated and PARP2 is removed from damaged chromatin following initial poly-ADP-ribosylation of chromatin to avoid prolonged residence (trapping) that has cytotoxic consequences. CHD1L promotes PARP2 removal from chromatin. ADP-ribosyltransferase activity is inhibited by a number of PARP inhibitors (PARPi) compounds, that are used the treatment of breast or ovarian cancers that have defects in DNA repair by homologous recombination. PARPi molecules (niraparib, talazoparib, and, to a lesser extent, olaparib) also trap PARP2 at DNA damage sites. Poly-ADP-ribosyltransferase that mediates poly-ADP-ribosylation of proteins and plays a key role in DNA repair. Mediates glutamate, aspartate or serine ADP-ribosylation of proteins: the ADP-D-ribosyl group of NAD(+) is transferred to the acceptor carboxyl group of target residues and further ADP-ribosyl groups are transferred to the 2'-position of the terminal adenosine moiety, building up a polymer with an average chain length of 20-30 units. Serine ADP-ribosylation of proteins constitutes the primary form of ADP-ribosylation of proteins in response to DNA damage. Mediates glutamate and aspartate ADP-ribosylation of target proteins in absence of HPF1. Following interaction with HPF1, catalyzes serine ADP-ribosylation of target proteins; HPF1 conferring serine specificity by completing the PARP2 active site. PARP2 initiates the repair of double-strand DNA breaks: recognizes and binds DNA breaks within chromatin and recruits HPF1, licensing serine ADP-ribosylation of target proteins, such as histones, thereby promoting decompaction of chromatin and the recruitment of repair factors leading to the reparation of DNA strand breaks. HPF1 initiates serine ADP-ribosylation but restricts the polymerase activity of PARP2 in order to limit the length of poly-ADP-ribose chains. Specifically mediates formation of branched poly-ADP-ribosylation. Branched poly-ADP-ribose chains are specifically recognized by some factors, such as APLF. In addition to proteins, also able to ADP-ribosylate DNA: preferentially acts on 5'-terminal phosphates at DNA strand breaks termini in nicked duplex. This Homo sapiens (Human) protein is Poly [ADP-ribose] polymerase 2.